The sequence spans 208 residues: Na(+)-translocating NADH-quinone reductase subunit D (208 aa).

The next 5 helical transmembrane spans lie at 42-62, 72-92, 103-123, 131-151, and 178-198; these read IVMG…ISLV, IIVQ…LLQA, VFVG…AFAM, LIDG…VATV, and NGLF…IWGL.

The protein belongs to the NqrDE/RnfAE family. As to quaternary structure, composed of six subunits; NqrA, NqrB, NqrC, NqrD, NqrE and NqrF.

The protein resides in the cell inner membrane. It catalyses the reaction a ubiquinone + n Na(+)(in) + NADH + H(+) = a ubiquinol + n Na(+)(out) + NAD(+). NQR complex catalyzes the reduction of ubiquinone-1 to ubiquinol by two successive reactions, coupled with the transport of Na(+) ions from the cytoplasm to the periplasm. NqrA to NqrE are probably involved in the second step, the conversion of ubisemiquinone to ubiquinol. This is Na(+)-translocating NADH-quinone reductase subunit D from Neisseria meningitidis serogroup B (strain ATCC BAA-335 / MC58).